The primary structure comprises 487 residues: Glutamyl-tRNA(Gln) amidotransferase subunit A (487 aa).

Residues Lys-79 and Ser-158 each act as charge relay system in the active site. The Acyl-ester intermediate role is filled by Ser-182.

Belongs to the amidase family. GatA subfamily. As to quaternary structure, heterotrimer of A, B and C subunits.

The catalysed reaction is L-glutamyl-tRNA(Gln) + L-glutamine + ATP + H2O = L-glutaminyl-tRNA(Gln) + L-glutamate + ADP + phosphate + H(+). Allows the formation of correctly charged Gln-tRNA(Gln) through the transamidation of misacylated Glu-tRNA(Gln) in organisms which lack glutaminyl-tRNA synthetase. The reaction takes place in the presence of glutamine and ATP through an activated gamma-phospho-Glu-tRNA(Gln). This chain is Glutamyl-tRNA(Gln) amidotransferase subunit A, found in Ehrlichia chaffeensis (strain ATCC CRL-10679 / Arkansas).